The chain runs to 370 residues: Anhydro-N-acetylmuramic acid kinase (370 aa).

ATP is bound at residue 13–20 (GTSMDGVD).

It belongs to the anhydro-N-acetylmuramic acid kinase family.

It catalyses the reaction 1,6-anhydro-N-acetyl-beta-muramate + ATP + H2O = N-acetyl-D-muramate 6-phosphate + ADP + H(+). Its pathway is amino-sugar metabolism; 1,6-anhydro-N-acetylmuramate degradation. It functions in the pathway cell wall biogenesis; peptidoglycan recycling. Catalyzes the specific phosphorylation of 1,6-anhydro-N-acetylmuramic acid (anhMurNAc) with the simultaneous cleavage of the 1,6-anhydro ring, generating MurNAc-6-P. Is required for the utilization of anhMurNAc either imported from the medium or derived from its own cell wall murein, and thus plays a role in cell wall recycling. This chain is Anhydro-N-acetylmuramic acid kinase, found in Vibrio parahaemolyticus serotype O3:K6 (strain RIMD 2210633).